Here is a 479-residue protein sequence, read N- to C-terminus: MASSYKMSEQSTISEHILQKTCDHLILTDRSGLKAESAAEEMKQTAENQGNTVHWAALLIFAVIIPTIGGNILVILAVSLEKRLQYATNYFLMSLAVADLLVGLFVMPIALLTIMFEATWPLPLALCPAWLFLDVLFSTASIMHLCAISLDRYIAIKKPIQANQCNSRTTAFVKITVVWLISIGIAIPVPIKGIEADVVNAHNITCELTKDRFGSFMLFGSLAAFFAPLTIMIVTYFLTIHALRKKAYLVRNRPPQRLTRWTVSTVLQREDSSFSSPEKMVMLDGSHKDKILPNSTDETLMRRMSSAGKKPAQTISNEQRASKVLGIVFLFFLLMWCPFFITNVTLALCDSCNQTTLKTLLQIFVWVGYVSSGVNPLIYTLFNKTFREAFGRYITCNYQATKSVKVLRKCSSTLYFGNSMVENSKFFTKHGIRNGINPAMYQSPVRLRSSTIQSSSIILLNTFLTENDGDKVEDQVSYI.

Topologically, residues Met-1–Trp-55 are extracellular. Residues Ala-56–Val-78 form a helical membrane-spanning segment. Residues Ser-79–Asn-89 lie on the Cytoplasmic side of the membrane. The helical transmembrane segment at Tyr-90–Leu-112 threads the bilayer. At Thr-113–Pro-128 the chain is on the extracellular side. Cysteines 127 and 206 form a disulfide. A helical transmembrane segment spans residues Ala-129–Leu-150. Residues Asp-134 and Thr-139 each coordinate ergotamine. Residues Asp-151–Tyr-153 carry the DRY motif; important for ligand-induced conformation changes motif. Over Asp-151–Thr-170 the chain is Cytoplasmic. Residues Ala-171–Ile-191 form a helical membrane-spanning segment. At Lys-192 to Ser-215 the chain is on the extracellular side. N-linked (GlcNAc...) asparagine glycosylation is present at Asn-203. Leu-208 contacts ergotamine. Positions Asp-211–Gly-214 match the [DE]RFG motif; may stabilize a conformation that preferentially activates signaling via beta-arrestin family members motif. The helical transmembrane segment at Phe-216–Leu-238 threads the bilayer. Topologically, residues Thr-239 to Lys-323 are cytoplasmic. A helical transmembrane segment spans residues Val-324–Val-344. The Extracellular portion of the chain corresponds to Thr-345–Thr-359. Cys-349 and Cys-352 are oxidised to a cystine. The N-linked (GlcNAc...) asparagine glycan is linked to Asn-353. The chain crosses the membrane as a helical span at residues Leu-360–Leu-381. Positions Asn-375–Tyr-379 match the NPxxY motif; important for ligand-induced conformation changes and signaling motif. The Cytoplasmic segment spans residues Phe-382–Ile-479. Cys-396 carries S-palmitoyl cysteine lipidation. The PDZ-binding signature appears at Ser-477 to Ile-479.

Belongs to the G-protein coupled receptor 1 family. Interacts (via C-terminus) with MPDZ. Stomach fundus.

It localises to the cell membrane. It is found in the synapse. Its subcellular location is the synaptosome. G-protein coupled receptor for 5-hydroxytryptamine (serotonin). Also functions as a receptor for various ergot alkaloid derivatives and psychoactive substances. Ligand binding causes a conformation change that triggers signaling via guanine nucleotide-binding proteins (G proteins) and modulates the activity of downstream effectors. HTR2B is coupled to G(q)/G(11) G alpha proteins and activates phospholipase C-beta, releasing diacylglycerol (DAG) and inositol 1,4,5-trisphosphate (IP3) second messengers that modulate the activity of phosphatidylinositol 3-kinase and promote the release of Ca(2+) ions from intracellular stores, respectively. Beta-arrestin family members inhibit signaling via G proteins and mediate activation of alternative signaling pathways. Plays a role in the regulation of dopamine and 5-hydroxytryptamine release, 5-hydroxytryptamine uptake and in the regulation of extracellular dopamine and 5-hydroxytryptamine levels, and thereby affects neural activity. May play a role in the perception of pain. Plays a role in the regulation of behavior, including impulsive behavior. Required for normal proliferation of embryonic cardiac myocytes and normal heart development. Protects cardiomyocytes against apoptosis. Plays a role in the adaptation of pulmonary arteries to chronic hypoxia. Plays a role in vasoconstriction. Required for normal osteoblast function and proliferation, and for maintaining normal bone density. Required for normal proliferation of the interstitial cells of Cajal in the intestine. In Rattus norvegicus (Rat), this protein is 5-hydroxytryptamine receptor 2B (Htr2b).